A 430-amino-acid chain; its full sequence is tRNA(Ile)-lysidine synthase (430 aa).

24-29 (SGGLDS) provides a ligand contact to ATP.

This sequence belongs to the tRNA(Ile)-lysidine synthase family.

The protein resides in the cytoplasm. The catalysed reaction is cytidine(34) in tRNA(Ile2) + L-lysine + ATP = lysidine(34) in tRNA(Ile2) + AMP + diphosphate + H(+). Ligates lysine onto the cytidine present at position 34 of the AUA codon-specific tRNA(Ile) that contains the anticodon CAU, in an ATP-dependent manner. Cytidine is converted to lysidine, thus changing the amino acid specificity of the tRNA from methionine to isoleucine. The protein is tRNA(Ile)-lysidine synthase of Haemophilus influenzae (strain 86-028NP).